Reading from the N-terminus, the 577-residue chain is Sulfite reductase [NADPH] hemoprotein beta-component (577 aa).

[4Fe-4S] cluster is bound by residues cysteine 440, cysteine 446, cysteine 486, and cysteine 490. Residue cysteine 490 participates in siroheme binding.

This sequence belongs to the nitrite and sulfite reductase 4Fe-4S domain family. In terms of assembly, alpha(8)-beta(8). The alpha component is a flavoprotein, the beta component is a hemoprotein. Siroheme is required as a cofactor. [4Fe-4S] cluster serves as cofactor.

The enzyme catalyses hydrogen sulfide + 3 NADP(+) + 3 H2O = sulfite + 3 NADPH + 4 H(+). The protein operates within sulfur metabolism; hydrogen sulfide biosynthesis; hydrogen sulfide from sulfite (NADPH route): step 1/1. Its function is as follows. Component of the sulfite reductase complex that catalyzes the 6-electron reduction of sulfite to sulfide. This is one of several activities required for the biosynthesis of L-cysteine from sulfate. In Vibrio cholerae serotype O1 (strain ATCC 39541 / Classical Ogawa 395 / O395), this protein is Sulfite reductase [NADPH] hemoprotein beta-component.